Consider the following 752-residue polypeptide: Catalase-peroxidase (752 aa).

Residues 1–21 are disordered; sequence MSNESKCPFHQTAGGGTTNRD. A cross-link (tryptophyl-tyrosyl-methioninium (Trp-Tyr) (with M-271)) is located at residues 91-245; sequence WHSAGTYRIG…LAAVQMGLIY (155 aa). His92 (proton acceptor) is an active-site residue. The disordered stretch occupies residues 204 to 228; that stretch reads QAPGQGDLVAEPAKHGEEQNRDLSA. Residues 215 to 228 show a composition bias toward basic and acidic residues; sequence PAKHGEEQNRDLSA. A cross-link (tryptophyl-tyrosyl-methioninium (Tyr-Met) (with W-91)) is located at residues 245-271; the sequence is YVNPEGPEGNPDPVASGKDIRETFGRM. Residue His286 participates in heme binding. Positions 366–391 are disordered; the sequence is AHQWQPKEGKGAGTVPDAHDPSKRHA.

The protein belongs to the peroxidase family. Peroxidase/catalase subfamily. Homodimer or homotetramer. Heme b serves as cofactor. Formation of the three residue Trp-Tyr-Met cross-link is important for the catalase, but not the peroxidase activity of the enzyme.

The catalysed reaction is H2O2 + AH2 = A + 2 H2O. It carries out the reaction 2 H2O2 = O2 + 2 H2O. In terms of biological role, bifunctional enzyme with both catalase and broad-spectrum peroxidase activity. In Pseudomonas putida (strain W619), this protein is Catalase-peroxidase.